We begin with the raw amino-acid sequence, 85 residues long: uncharacterized protein (85 aa).

This is an uncharacterized protein from Shigella flexneri.